We begin with the raw amino-acid sequence, 396 residues long: MLDAQTIATVKATIPLLVETGPKLTAHFYDRMFTHNPELKEIFNMSNQRNGDQREALFNAIAAYASNIENLPALLPAVEKIAQKHTSFQIKPEQYNIVGEHLLATLDEMFSPGQEVLDAWGKAYGVLANVFINREAEIYNENASKAGGWEGTRDFRIVAKTPRSALITSFELEPVDGGAVAEYRPGQYLGVWLKPEGFPHQEIRQYSLTRKPDGKGYRIAVKREEGGQVSNWLHNHANVGDVVKLVAPAGDFFMAVADDTPVTLISAGVGQTPMLAMLDTLAKAGHTAQVNWFHAAENGDVHAFADEVKELGLSLPRFTAHTWYRQPNEADRAKGQFDSEGLMDLSKLEGAFSDPTMQFYLCGPVGFMQFAAKQLVDLGVKQENIHYECFGPHKVL.

The Globin domain maps to 1 to 136 (MLDAQTIATV…LANVFINREA (136 aa)). His85 is a binding site for heme b. Active-site charge relay system residues include Tyr95 and Glu135. The tract at residues 147–396 (GGWEGTRDFR…YECFGPHKVL (250 aa)) is reductase. The region spanning 150–255 (EGTRDFRIVA…VAPAGDFFMA (106 aa)) is the FAD-binding FR-type domain. Residues Tyr188 and 204–207 (RQYS) contribute to the FAD site. 268–273 (GVGQTP) contributes to the NADP(+) binding site. 389-392 (CFGP) contributes to the FAD binding site.

The protein belongs to the globin family. Two-domain flavohemoproteins subfamily. In the C-terminal section; belongs to the flavoprotein pyridine nucleotide cytochrome reductase family. Heme b is required as a cofactor. It depends on FAD as a cofactor.

It catalyses the reaction 2 nitric oxide + NADPH + 2 O2 = 2 nitrate + NADP(+) + H(+). The catalysed reaction is 2 nitric oxide + NADH + 2 O2 = 2 nitrate + NAD(+) + H(+). Functionally, is involved in NO detoxification in an aerobic process, termed nitric oxide dioxygenase (NOD) reaction that utilizes O(2) and NAD(P)H to convert NO to nitrate, which protects the bacterium from various noxious nitrogen compounds. Therefore, plays a central role in the inducible response to nitrosative stress. This is Flavohemoprotein from Escherichia coli O6:H1 (strain CFT073 / ATCC 700928 / UPEC).